The chain runs to 63 residues: Cecropin-A2 (63 aa).

A signal peptide spans 1-23 (MNFYNIFVFVALILAITIGQSEA). R62 is modified (arginine amide).

It belongs to the cecropin family. Strongly expressed in larval, pupal and adult fat body and hemocytes after injection of bacteria. Maximal expression in the adult involves fat body cells of the head, thorax and abdomen.

It is found in the secreted. Its function is as follows. Cecropins have lytic and antibacterial activity against several Gram-positive and Gram-negative bacteria. The chain is Cecropin-A2 from Drosophila melanogaster (Fruit fly).